We begin with the raw amino-acid sequence, 218 residues long: Ribose-5-phosphate isomerase A (218 aa).

Substrate is bound by residues 28–31 (TGST), 81–84 (DSAD), and 94–97 (KGKG). The Proton acceptor role is filled by Glu103. Lys121 provides a ligand contact to substrate.

This sequence belongs to the ribose 5-phosphate isomerase family. In terms of assembly, homodimer.

It catalyses the reaction aldehydo-D-ribose 5-phosphate = D-ribulose 5-phosphate. It functions in the pathway carbohydrate degradation; pentose phosphate pathway; D-ribose 5-phosphate from D-ribulose 5-phosphate (non-oxidative stage): step 1/1. Its function is as follows. Catalyzes the reversible conversion of ribose-5-phosphate to ribulose 5-phosphate. This Blochmanniella pennsylvanica (strain BPEN) protein is Ribose-5-phosphate isomerase A.